Consider the following 246-residue polypeptide: Lipoprotein-releasing system ATP-binding protein LolD 1 (246 aa).

The region spanning 6 to 244 (LKLERIRKDL…ASVTNEAASL (239 aa)) is the ABC transporter domain. An ATP-binding site is contributed by 43–50 (GPSGSGKS).

The protein belongs to the ABC transporter superfamily. Lipoprotein translocase (TC 3.A.1.125) family. The complex is composed of two ATP-binding proteins (LolD) and two transmembrane proteins (LolC and LolE).

It localises to the cell inner membrane. Its function is as follows. Part of the ABC transporter complex LolCDE involved in the translocation of mature outer membrane-directed lipoproteins, from the inner membrane to the periplasmic chaperone, LolA. Responsible for the formation of the LolA-lipoprotein complex in an ATP-dependent manner. The sequence is that of Lipoprotein-releasing system ATP-binding protein LolD 1 from Chlorobium chlorochromatii (strain CaD3).